The following is a 573-amino-acid chain: BICD family-like cargo adapter 1 (573 aa).

The tract at residues E67–P97 is disordered. Over residues R68–Q77 the composition is skewed to basic and acidic residues. Residues A113 to G117 carry the CC1 box motif. Positions K118–R376 form a coiled coil. The disordered stretch occupies residues D386–A412. Positions S387–S396 are enriched in low complexity. Residues L440 to R525 adopt a coiled-coil conformation.

It belongs to the BICDR family. In terms of assembly, part of a tripartite complex with dynein and dynactin, acts an adapter linking the dynein motor complex and dynactin. Interacts with KIF1C. Interacts with RAB6A and RAB6B; interaction is specific to Rab6.

Its subcellular location is the cytoplasm. It localises to the cytoskeleton. It is found in the microtubule organizing center. The protein resides in the centrosome. In terms of biological role, acts as an adapter protein linking the dynein motor complex to various cargos and converts dynein from a non-processive to a highly processive motor in the presence of dynactin. Facilitates the interaction between dynein and dynactin and activates dynein processivity (the ability to move along a microtubule for a long distance without falling off the track). Predominantly recruits 2 dyneins, which increases both the force and speed of the microtubule motor. Component of secretory vesicle machinery in developing neurons that acts as a regulator of neurite outgrowth. Regulates the secretory vesicle transport by controlling the accumulation of Rab6-containing secretory vesicles in the pericentrosomal region restricting anterograde secretory transport during the early phase of neuronal differentiation, thereby inhibiting neuritogenesis. The sequence is that of BICD family-like cargo adapter 1 (BICDL1) from Homo sapiens (Human).